Here is a 719-residue protein sequence, read N- to C-terminus: Polyribonucleotide nucleotidyltransferase (719 aa).

Residues aspartate 507 and aspartate 513 each coordinate Mg(2+). The region spanning 573-633 (PKLELFSVDP…EQIKAAKDYI (61 aa)) is the KH domain. An S1 motif domain is found at 658–719 (GQEFQGIVKK…NGKISVDLCE (62 aa)).

This sequence belongs to the polyribonucleotide nucleotidyltransferase family. The cofactor is Mg(2+).

It localises to the cytoplasm. It catalyses the reaction RNA(n+1) + phosphate = RNA(n) + a ribonucleoside 5'-diphosphate. Functionally, involved in mRNA degradation. Catalyzes the phosphorolysis of single-stranded polyribonucleotides processively in the 3'- to 5'-direction. The chain is Polyribonucleotide nucleotidyltransferase from Campylobacter jejuni (strain RM1221).